A 291-amino-acid polypeptide reads, in one-letter code: rRNA 2'-O-methyltransferase fibrillarin (291 aa).

2 stretches are compositionally biased toward basic and acidic residues: residues 1–12 and 20–29; these read MKKTNKRPDGRK and FRSDKGEGRG. The disordered stretch occupies residues 1 to 45; that stretch reads MKKTNKRPDGRKFQKGGKPFRSDKGEGRGRMNNKKKGSVNAGLDR. 2 positions are modified to asymmetric dimethylarginine: R28 and R62. Residues 134-135, 153-154, 178-179, and 198-201 contribute to the S-adenosyl-L-methionine site; these read TT, EF, DA, and DVSQ.

Belongs to the methyltransferase superfamily. Fibrillarin family. Component of box C/D small nucleolar ribonucleoprotein (snoRNP) particles.

The protein resides in the nucleus. The protein localises to the nucleolus. It carries out the reaction L-glutaminyl-[histone H2A] + S-adenosyl-L-methionine = N(5)-methyl-L-glutaminyl-[histone H2A] + S-adenosyl-L-homocysteine + H(+). S-adenosyl-L-methionine-dependent methyltransferase that has the ability to methylate both RNAs and proteins. Involved in pre-rRNA processing. Utilizes the methyl donor S-adenosyl-L-methionine to catalyze the site-specific 2'-hydroxyl methylation of ribose moieties in pre-ribosomal RNA. Site specificity is provided by a guide RNA that base pairs with the substrate. Methylation occurs at a characteristic distance from the sequence involved in base pairing with the guide RNA. Also acts as a protein methyltransferase by mediating methylation of 'Gln-105' of histone H2A (H2AQ105me), a modification that impairs binding of the FACT complex and is specifically present at 35S ribosomal DNA locus. The sequence is that of rRNA 2'-O-methyltransferase fibrillarin (NOP1) from Encephalitozoon cuniculi (strain GB-M1) (Microsporidian parasite).